The sequence spans 236 residues: Small ribosomal subunit protein uS3 (236 aa).

The KH type-2 domain maps to 39-107 (IREFLTEELK…DTSLNIVEVR (69 aa)). Residues 214–236 (ASERRAVEGDNQGSSSNRRRENA) are disordered.

The protein belongs to the universal ribosomal protein uS3 family. As to quaternary structure, part of the 30S ribosomal subunit. Forms a tight complex with proteins S10 and S14.

In terms of biological role, binds the lower part of the 30S subunit head. Binds mRNA in the 70S ribosome, positioning it for translation. This is Small ribosomal subunit protein uS3 from Brucella suis (strain ATCC 23445 / NCTC 10510).